Reading from the N-terminus, the 614-residue chain is Vitamin B12 transporter BtuB (614 aa).

The N-terminal stretch at 1–20 (MIKKASLLTACSVTAFSAWA) is a signal peptide. The Periplasmic portion of the chain corresponds to 21–157 (QDTSPDTLVV…NIITTRDEPG (137 aa)). The TonB box signature appears at 26–33 (DTLVVTAN). One can recognise a TBDR plug domain in the interval 38 to 152 (PRSTVLAPTT…IGGVVNIITT (115 aa)). Residues Leu-83, Ser-85, Asn-92, and 110–111 (VS) each bind cyanocob(III)alamin. Residues 155 to 614 (EPGTEISAGW…EYTLSGSYTF (460 aa)) form the TBDR beta-barrel domain. The chain crosses the membrane as a beta stranded span at residues 158-165 (TEISAGWG). At 166–168 (SNS) the chain is on the extracellular side. A beta stranded transmembrane segment spans residues 169–178 (YQNYDVSTQQ). Residues 179-183 (QLGDK) are Periplasmic-facing. Residues 184-195 (TRVTLLGDYAHT) traverse the membrane as a beta stranded segment. Residues 196–216 (HGYDVVAYGNTGTQAQTDNDG) lie on the Extracellular side of the membrane. Ca(2+) is bound by residues Asp-199, Gln-211, Asp-213, and Asp-215. A beta stranded membrane pass occupies residues 217–227 (FLSKTLYGALE). The Periplasmic segment spans residues 228–231 (HNFT). A beta stranded transmembrane segment spans residues 232–248 (DAWSGFVRGYGYDNRTN). The Ca(2+) site is built by Tyr-249 and Asp-250. The Extracellular portion of the chain corresponds to 249-262 (YDAYYSPGSPLLDT). A cyanocob(III)alamin-binding site is contributed by Ala-251. Position 261 (Asp-261) interacts with Ca(2+). A beta stranded transmembrane segment spans residues 263–277 (RKLYSQSWDAGLRYN). Gly-278 is a topological domain (periplasmic). Residues 279–296 (ELIKSQLITSYSHSKDYN) form a beta stranded membrane-spanning segment. Topologically, residues 297 to 308 (YDPHYGRYDSSA) are extracellular. Residue Thr-309 participates in cyanocob(III)alamin binding. A beta stranded transmembrane segment spans residues 309-325 (TLDEMKQYTVQWANNVI). Residues 326 to 327 (VG) lie on the Periplasmic side of the membrane. A beta stranded transmembrane segment spans residues 328 to 337 (HGSIGAGVDW). Topologically, residues 338 to 352 (QKQTTTPGTGYVEDG) are extracellular. A beta stranded transmembrane segment spans residues 353–369 (YDQRNTGIYLTGLQQVG). Asp-370 is a topological domain (periplasmic). A beta stranded membrane pass occupies residues 371 to 381 (FTFEGAARSDD). The Extracellular segment spans residues 382–384 (NSQ). The chain crosses the membrane as a beta stranded span at residues 385-400 (FGRHGTWQTSAGWEFI). Over 401–402 (EG) the chain is Periplasmic. Residues 403 to 417 (YRFIASYGTSYKAPN) traverse the membrane as a beta stranded segment. The Extracellular portion of the chain corresponds to 418–433 (LGQLYGFYGNPNLDPE). A beta stranded transmembrane segment spans residues 434 to 443 (KSKQWEGAFE). Over 444-448 (GLTAG) the chain is Periplasmic. Residues 449–458 (VNWRISGYRN) traverse the membrane as a beta stranded segment. Over 459-472 (DVSDLIDYDDHTLK) the chain is Extracellular. The beta stranded transmembrane segment at 473 to 490 (YYNEGKARIKGVEATANF) threads the bilayer. The Periplasmic segment spans residues 491–493 (DTG). The beta stranded transmembrane segment at 494–509 (PLTHTVSYDYVDARNA) threads the bilayer. Over 510 to 516 (ITDTPLL) the chain is Extracellular. Arg-517 is a binding site for cyanocob(III)alamin. The chain crosses the membrane as a beta stranded span at residues 517 to 529 (RRAKQQVKYQLDW). The Periplasmic segment spans residues 530-534 (QLYDF). Residues 535–550 (DWGITYQYLGTRYDKD) traverse the membrane as a beta stranded segment. Tyr-551 is a binding site for cyanocob(III)alamin. Topologically, residues 551–557 (YSSYPYQ) are extracellular. Residues 558–572 (TVKMGGVSLWDLAVA) form a beta stranded membrane-spanning segment. The Periplasmic portion of the chain corresponds to 573–584 (YPVTSHLTVRGK). A beta stranded membrane pass occupies residues 585-596 (IANLFDKDYETV). Residues 597-601 (YGYQT) lie on the Extracellular side of the membrane. The short motif at 597–614 (YGYQTAGREYTLSGSYTF) is the TonB C-terminal box element. A beta stranded transmembrane segment spans residues 602 to 614 (AGREYTLSGSYTF).

This sequence belongs to the TonB-dependent receptor family. BtuB (TC 1.B.14.3.1) subfamily. As to quaternary structure, interacts with TonB. In terms of assembly, (Microbial infection) The hairpin motif of the receptor-binding domain of colicin E3 (ColE3) interacts with BtuB without displacing BtuB's central plug. An N-terminal fragment of E3 binds OmpF; trimeric complexes with ColE3, BtuB and OmpF can be cross-linked and immunoprecipitated.

Its subcellular location is the cell outer membrane. Its activity is regulated as follows. Calcium increases vitamin B12 binding affinity by a factor of 50-100. With respect to regulation, (Microbial infection) Colicins E1, E3 and K inhibit cyanocobalamin (CN-B12) uptake; E1 and E3 inhibit binding of CN-B12 to cells while colicin K inhibits a later, energy-dependent step of CN-B12. Functionally, involved in the active translocation of vitamin B12 (cyanocobalamin) across the outer membrane to the periplasmic space. It derives its energy for transport by interacting with the trans-periplasmic membrane protein TonB. In terms of biological role, (Microbial infection) Acts as a receptor for bacteriophages BF23 and C1, and for A and E colicins. Cyanocobalamin (CN-B12) in solid medium protects against colicins E1 and E3. Does not act as the translocon for colicin E3 (ColE3). The translocon is OmpF; trimeric complexes with ColE3, BtuB and OmpF can be cross-linked and immunoprecipitated. This chain is Vitamin B12 transporter BtuB, found in Escherichia coli (strain K12).